The primary structure comprises 510 residues: 2,3-bisphosphoglycerate-independent phosphoglycerate mutase (510 aa).

Mn(2+) is bound by residues Asp13 and Ser63. The active-site Phosphoserine intermediate is Ser63. Substrate is bound by residues His124, 154 to 155, Arg186, Arg192, 262 to 265, and Lys334; these read RD and RADR. Mn(2+) contacts are provided by Asp401, His405, Asp442, His443, and His461.

This sequence belongs to the BPG-independent phosphoglycerate mutase family. In terms of assembly, monomer. The cofactor is Mn(2+).

It catalyses the reaction (2R)-2-phosphoglycerate = (2R)-3-phosphoglycerate. It participates in carbohydrate degradation; glycolysis; pyruvate from D-glyceraldehyde 3-phosphate: step 3/5. In terms of biological role, catalyzes the interconversion of 2-phosphoglycerate and 3-phosphoglycerate. The chain is 2,3-bisphosphoglycerate-independent phosphoglycerate mutase from Vibrio cholerae serotype O1 (strain ATCC 39541 / Classical Ogawa 395 / O395).